The primary structure comprises 376 residues: Glucose-1-phosphate adenylyltransferase (376 aa).

Alpha-D-glucose 1-phosphate-binding positions include tyrosine 101, glycine 166, 181–182 (EK), and serine 192.

This sequence belongs to the bacterial/plant glucose-1-phosphate adenylyltransferase family. In terms of assembly, homotetramer.

The catalysed reaction is alpha-D-glucose 1-phosphate + ATP + H(+) = ADP-alpha-D-glucose + diphosphate. The protein operates within glycan biosynthesis; glycogen biosynthesis. Involved in the biosynthesis of ADP-glucose, a building block required for the elongation reactions to produce glycogen. Catalyzes the reaction between ATP and alpha-D-glucose 1-phosphate (G1P) to produce pyrophosphate and ADP-Glc. The sequence is that of Glucose-1-phosphate adenylyltransferase from Bacillus cytotoxicus (strain DSM 22905 / CIP 110041 / 391-98 / NVH 391-98).